A 159-amino-acid chain; its full sequence is Probable chemoreceptor glutamine deamidase CheD 2 (159 aa).

The protein belongs to the CheD family.

It catalyses the reaction L-glutaminyl-[protein] + H2O = L-glutamyl-[protein] + NH4(+). In terms of biological role, probably deamidates glutamine residues to glutamate on methyl-accepting chemotaxis receptors (MCPs), playing an important role in chemotaxis. The sequence is that of Probable chemoreceptor glutamine deamidase CheD 2 from Anaeromyxobacter dehalogenans (strain 2CP-C).